The primary structure comprises 368 residues: MFYWLIELTNTFPSLAMFRGLLNVFRYITFRTGGAVVTGALFVFLFGPWIIDHLRLRQGKGQPIRADGPQSHIISKKGTPTMGGLMILSGLVVSTVLWANPLNPYVWIVLAVTLGFGFVGFYDDYLKVTKQSHSGFAGRARILIEAGIALVACYALVRLGRDPSSTGLAIPFFKDLVIKFGWMYVIFGAFVIVGAGNAVNLTDGLDGLAIVPVMIASASFGLIAYLAGNAVFSDYLQIHYVAGTGELAVLCGAVLGAGLGFLWFNAPPASIFMGDTGSLALGGMLGSIAVAVKHEIVLAVIGGLFVLEAVSVIVQVASFKLTGKRIFKMAPIHHHFEQLGWTEPQIVIRFWIISVMLALVGLSTLKLR.

The next 10 helical transmembrane spans lie at 34–54 (GAVVTGALFVFLFGPWIIDHL), 79–99 (TPTMGGLMILSGLVVSTVLWA), 102–122 (LNPYVWIVLAVTLGFGFVGFY), 140–160 (ARILIEAGIALVACYALVRLG), 176–196 (LVIKFGWMYVIFGAFVIVGAG), 207–227 (GLAIVPVMIASASFGLIAYLA), 247–267 (LAVLCGAVLGAGLGFLWFNAP), 271–291 (IFMGDTGSLALGGMLGSIAVA), 296–316 (IVLAVIGGLFVLEAVSVIVQV), and 345–365 (QIVIRFWIISVMLALVGLSTL).

Belongs to the glycosyltransferase 4 family. MraY subfamily. Requires Mg(2+) as cofactor.

The protein localises to the cell inner membrane. It carries out the reaction UDP-N-acetyl-alpha-D-muramoyl-L-alanyl-gamma-D-glutamyl-meso-2,6-diaminopimeloyl-D-alanyl-D-alanine + di-trans,octa-cis-undecaprenyl phosphate = di-trans,octa-cis-undecaprenyl diphospho-N-acetyl-alpha-D-muramoyl-L-alanyl-D-glutamyl-meso-2,6-diaminopimeloyl-D-alanyl-D-alanine + UMP. Its pathway is cell wall biogenesis; peptidoglycan biosynthesis. In terms of biological role, catalyzes the initial step of the lipid cycle reactions in the biosynthesis of the cell wall peptidoglycan: transfers peptidoglycan precursor phospho-MurNAc-pentapeptide from UDP-MurNAc-pentapeptide onto the lipid carrier undecaprenyl phosphate, yielding undecaprenyl-pyrophosphoryl-MurNAc-pentapeptide, known as lipid I. This Bradyrhizobium sp. (strain BTAi1 / ATCC BAA-1182) protein is Phospho-N-acetylmuramoyl-pentapeptide-transferase.